A 718-amino-acid chain; its full sequence is Ribosomal RNA large subunit methyltransferase K/L (718 aa).

The 112-residue stretch at D44–L155 folds into the THUMP domain.

The protein belongs to the methyltransferase superfamily. RlmKL family.

It localises to the cytoplasm. It carries out the reaction guanosine(2445) in 23S rRNA + S-adenosyl-L-methionine = N(2)-methylguanosine(2445) in 23S rRNA + S-adenosyl-L-homocysteine + H(+). It catalyses the reaction guanosine(2069) in 23S rRNA + S-adenosyl-L-methionine = N(2)-methylguanosine(2069) in 23S rRNA + S-adenosyl-L-homocysteine + H(+). Its function is as follows. Specifically methylates the guanine in position 2445 (m2G2445) and the guanine in position 2069 (m7G2069) of 23S rRNA. In Francisella tularensis subsp. novicida (strain U112), this protein is Ribosomal RNA large subunit methyltransferase K/L.